An 883-amino-acid chain; its full sequence is Bifunctional heparan sulfate N-deacetylase/N-sulfotransferase 2 (883 aa).

The Cytoplasmic segment spans residues 1 to 18; that stretch reads MLQLWKVVRPARQLELHR. A helical; Signal-anchor for type II membrane protein transmembrane segment spans residues 19 to 39; it reads LILLLIGFSLVSMGFLAYYVS. Over 40–883 the chain is Lumenal; it reads TSPKAKEPLP…REELQHSSVG (844 aa). The heparan sulfate N-deacetylase 2 stretch occupies residues 41–597; sequence SPKAKEPLPL…KRHKDIWSKE (557 aa). Residues 49–82 are disordered; the sequence is PLPLGDCSSSGAAGPGPARPPVPPRPQRPPETTR. Pro residues predominate over residues 65 to 77; that stretch reads PARPPVPPRPQRP. Residues asparagine 233, asparagine 350, and asparagine 400 are each glycosylated (N-linked (GlcNAc...) asparagine). The tract at residues 598-883 is heparan sulfate N-sulfotransferase 2; the sequence is KTCDRLPKFL…REELQHSSVG (286 aa). The For sulfotransferase activity role is filled by lysine 613. 613 to 617 provides a ligand contact to 3'-phosphoadenylyl sulfate; it reads KTGTT. N-linked (GlcNAc...) asparagine glycosylation occurs at asparagine 666. Serine 711 lines the 3'-phosphoadenylyl sulfate pocket. 2 N-linked (GlcNAc...) asparagine glycosylation sites follow: asparagine 726 and asparagine 802. Residues cysteine 817 and cysteine 827 are joined by a disulfide bond. 3'-phosphoadenylyl sulfate is bound at residue 832-836; sequence KGRRY.

It belongs to the sulfotransferase 1 family. NDST subfamily. Monomer. In terms of tissue distribution, widely expressed in adult and throughout development.

It is found in the golgi apparatus membrane. The enzyme catalyses alpha-D-glucosaminyl-[heparan sulfate](n) + 3'-phosphoadenylyl sulfate = N-sulfo-alpha-D-glucosaminyl-[heparan sulfate](n) + adenosine 3',5'-bisphosphate + 2 H(+). It participates in glycan metabolism; heparan sulfate biosynthesis. The protein operates within glycan metabolism; heparin biosynthesis. Its function is as follows. Essential bifunctional enzyme that catalyzes both the N-deacetylation and the N-sulfation of glucosamine (GlcNAc) of the glycosaminoglycan in heparan sulfate. Modifies the GlcNAc-GlcA disaccharide repeating sugar backbone to make N-sulfated heparosan, a prerequisite substrate for later modifications in heparin biosynthesis. Plays a role in determining the extent and pattern of sulfation of heparan sulfate. Required for the exosomal release of SDCBP, CD63 and syndecan. The polypeptide is Bifunctional heparan sulfate N-deacetylase/N-sulfotransferase 2 (Ndst2) (Mus musculus (Mouse)).